A 391-amino-acid chain; its full sequence is MRKLFTSESVTEGHPDKICDQISDAVLDAILDKDPNGRVACETAVTTGMVMVMGEISTKCYVDIPKLVRETIRGIGYDRAKYGFDCETCSVITSIDEQSVDIAMGVDEALESKKGEMDKLDAVGAGDQGMMFGFATNETKEYMPMPIEMAHKLSRRLSEVRKNGTLPYLRPDGKTQVTVEYENGKPVRIDAIVISTQHGPEIYLEQIEKDIKEHVIKVIVPSELLDENTKYFINPTGRFVVGGPQGDSGLTGRKIIVDTYGGYGRHGGGAFSGKDPTKVDRSAAYAARWVAKNLVAAGVADKLEIQLAYAIGVAKPVSISVDTFGTGKMTDEEIVSIVNKVFDLRPGAIIRDLDLRRPIYKQVAAYGHFGRTDIDVPWERLDKVEEIKKHI.

His-14 serves as a coordination point for ATP. Asp-16 provides a ligand contact to Mg(2+). Residue Glu-42 participates in K(+) binding. L-methionine contacts are provided by Glu-55 and Gln-98. Residues 98-108 are flexible loop; the sequence is QSVDIAMGVDE. Residues 172 to 174, 238 to 239, Asp-247, 253 to 254, Ala-270, and Lys-274 each bind ATP; these read DGK, RF, and RK. An L-methionine-binding site is contributed by Asp-247. Lys-278 lines the L-methionine pocket.

This sequence belongs to the AdoMet synthase family. Homotetramer; dimer of dimers. The cofactor is Mg(2+). Requires K(+) as cofactor.

It is found in the cytoplasm. The enzyme catalyses L-methionine + ATP + H2O = S-adenosyl-L-methionine + phosphate + diphosphate. It participates in amino-acid biosynthesis; S-adenosyl-L-methionine biosynthesis; S-adenosyl-L-methionine from L-methionine: step 1/1. Catalyzes the formation of S-adenosylmethionine (AdoMet) from methionine and ATP. The overall synthetic reaction is composed of two sequential steps, AdoMet formation and the subsequent tripolyphosphate hydrolysis which occurs prior to release of AdoMet from the enzyme. This is S-adenosylmethionine synthase from Clostridium botulinum (strain Kyoto / Type A2).